The primary structure comprises 360 residues: G-box-binding factor 2 (360 aa).

Polar residues predominate over residues 1–16 (MGSNEEGNPTNNSDKP). 2 disordered regions span residues 1–26 (MGSN…EQSN) and 150–275 (KVGS…AETE). A compositionally biased stretch (low complexity) spans 164–184 (SQSSENDGSSNGSDGNTTGGE). Over residues 198-208 (TGERPSSQNSL) the composition is skewed to polar residues. The span at 246 to 264 (NEKEVKREKRKQSNRESAR) shows a compositional bias: basic and acidic residues. Residues 249–312 (EVKREKRKQS…EKLRLENEAI (64 aa)) enclose the bZIP domain. Positions 251–270 (KREKRKQSNRESARRSRLRK) are basic motif. Positions 277 to 312 (LSVKVDALVAENMSLRSKLGQLNNESEKLRLENEAI) are leucine-zipper. Residues 335–352 (NSVSGSKTVQHQLLNASP) show a composition bias toward polar residues. Positions 335–360 (NSVSGSKTVQHQLLNASPITDPVAAS) are disordered.

This sequence belongs to the bZIP family. DNA-binding heterodimer. Interacts with GBF4. Interacts with BZIP16 and BZIP68. As to expression, found in both light and dark grown leaves.

It is found in the nucleus. Binds to the G-box motif (5'-CCACGTGG-3') of the rbcS-1A gene promoter. G-box and G-box-like motifs are cis-acting elements defined in promoters of certain plant genes which are regulated by such diverse stimuli as light-induction or hormone control. GBF2 is found to bind asymmetrically to the G-box. This is G-box-binding factor 2 (GBF2) from Arabidopsis thaliana (Mouse-ear cress).